Here is a 225-residue protein sequence, read N- to C-terminus: MRIDIITVLPEMIEGFFNCSIMKRAQNKGLAEIHIHNLRDYTEDKYRRVDDYPFGGFAGMVMKIEPIERCINALKAERDYDEVIFTTPDGEQFNQPMANSLSLAQNLIILCGHFKGIDYRIREHLITKEISIGDYVLTGGELAAAVMADAIVRIIPGVISDEQSALSDSFQDNLLAAPVYTRPADYKGWKVPDILLSGHEAKIKEWELQQSLERTKKLRPDLLED.

S-adenosyl-L-methionine is bound by residues Gly-112 and 132-137 (IGDYVL).

This sequence belongs to the RNA methyltransferase TrmD family. Homodimer.

Its subcellular location is the cytoplasm. It catalyses the reaction guanosine(37) in tRNA + S-adenosyl-L-methionine = N(1)-methylguanosine(37) in tRNA + S-adenosyl-L-homocysteine + H(+). Its function is as follows. Specifically methylates guanosine-37 in various tRNAs. The sequence is that of tRNA (guanine-N(1)-)-methyltransferase from Bacteroides thetaiotaomicron (strain ATCC 29148 / DSM 2079 / JCM 5827 / CCUG 10774 / NCTC 10582 / VPI-5482 / E50).